Reading from the N-terminus, the 198-residue chain is Glycerol-3-phosphate acyltransferase 3 (198 aa).

Transmembrane regions (helical) follow at residues 4–24 (TYLLFIVAYLLGSIPFALVVG), 71–91 (LPMVFGLDIHPLWFGLAAVLG), 113–133 (LLCYSPVVFAILAVVFFTLLF), and 147–167 (VVAVIASIVTGDKIFIIAMCL).

Belongs to the PlsY family. In terms of assembly, probably interacts with PlsX.

The protein resides in the cell membrane. The catalysed reaction is an acyl phosphate + sn-glycerol 3-phosphate = a 1-acyl-sn-glycero-3-phosphate + phosphate. It functions in the pathway lipid metabolism; phospholipid metabolism. Functionally, catalyzes the transfer of an acyl group from acyl-phosphate (acyl-PO(4)) to glycerol-3-phosphate (G3P) to form lysophosphatidic acid (LPA). This enzyme utilizes acyl-phosphate as fatty acyl donor, but not acyl-CoA or acyl-ACP. The polypeptide is Glycerol-3-phosphate acyltransferase 3 (Bacillus anthracis).